Consider the following 87-residue polypeptide: Acyl-CoA-binding protein (87 aa).

Residue Ser2 is modified to N-acetylserine. In terms of domain architecture, ACB spans 2-87 (SQADFDKAAE…VEELKKKYGI (86 aa)). An N6-acetyllysine; alternate modification is found at Lys8. N6-succinyllysine; alternate is present on Lys8. An acyl-CoA is bound at residue Lys14. Lys17 carries the post-translational modification N6-succinyllysine. A Phosphotyrosine modification is found at Tyr29. Residues 29–33 (YSHFK), Lys51, Lys55, and Tyr74 each bind an acyl-CoA. N6-acetyllysine is present on Lys51. Lys55 carries the N6-acetyllysine; alternate modification. Lys55 carries the N6-succinyllysine; alternate modification. An N6-(2-hydroxyisobutyryl)lysine; alternate modification is found at Lys55. Lys55 carries the N6-malonyllysine; alternate modification. Residue Lys77 is modified to N6-acetyllysine; alternate. At Lys77 the chain carries N6-succinyllysine; alternate.

The protein belongs to the ACBP family. In terms of assembly, monomer.

Its subcellular location is the endoplasmic reticulum. The protein localises to the golgi apparatus. Functionally, binds medium- and long-chain acyl-CoA esters with very high affinity and may function as an intracellular carrier of acyl-CoA esters. It is also able to displace diazepam from the benzodiazepine (BZD) recognition site located on the GABA type A receptor. It is therefore possible that this protein also acts as a neuropeptide to modulate the action of the GABA receptor. This is Acyl-CoA-binding protein (Dbi) from Rattus norvegicus (Rat).